The sequence spans 376 residues: Lipid-A-disaccharide synthase (376 aa).

It belongs to the LpxB family.

It catalyses the reaction a lipid X + a UDP-2-N,3-O-bis[(3R)-3-hydroxyacyl]-alpha-D-glucosamine = a lipid A disaccharide + UDP + H(+). Its pathway is bacterial outer membrane biogenesis; LPS lipid A biosynthesis. Functionally, condensation of UDP-2,3-diacylglucosamine and 2,3-diacylglucosamine-1-phosphate to form lipid A disaccharide, a precursor of lipid A, a phosphorylated glycolipid that anchors the lipopolysaccharide to the outer membrane of the cell. The protein is Lipid-A-disaccharide synthase of Pseudomonas fluorescens (strain Pf0-1).